A 514-amino-acid chain; its full sequence is Beta-secretase 2 (514 aa).

The signal sequence occupies residues 1–19; the sequence is MGALLRALLLLVLAQWLLS. Residues 20 to 62 constitute a propeptide that is removed on maturation; it reads AVPALAPAPFTLPLQVAGATNHRASAVPGLGTPELPRADGLAL. Residues 20 to 469 lie on the Extracellular side of the membrane; sequence AVPALAPAPF…NEPILWIVSY (450 aa). In terms of domain architecture, Peptidase A1 spans 88 to 425; it reads YYLEMLIGTP…DRAQRRVGFA (338 aa). Residue D106 is part of the active site. N166 carries an N-linked (GlcNAc...) asparagine glycan. 3 disulfide bridges follow: C229-C429, C288-C453, and C340-C389. The active site involves D299. N362 carries N-linked (GlcNAc...) asparagine glycosylation. A helical transmembrane segment spans residues 470–490; sequence ALMSVCGAILLVLILLLLLPL. The Cytoplasmic portion of the chain corresponds to 491–514; that stretch reads HCRHAPRDPEVVNDESSLVRHRWK.

The protein belongs to the peptidase A1 family. Monomer. Interacts with RTN3 and RTN4. Post-translationally, undergoes autoproteolytic cleavage. In terms of processing, glycosylated. In terms of tissue distribution, high expression in pancreatic islets. Expressed at much lower levels in the pituitary, colon, and ovaries and is nearly absent from all the other tissues.

It localises to the cell membrane. The protein localises to the golgi apparatus. It is found in the endoplasmic reticulum. The protein resides in the endosome. Its subcellular location is the melanosome. It carries out the reaction Broad endopeptidase specificity. Cleaves Glu-Val-Asn-Leu-|-Asp-Ala-Glu-Phe in the Swedish variant of Alzheimer's amyloid precursor protein.. Responsible for the proteolytic processing of the amyloid precursor protein (APP). Cleaves APP, between residues 690 and 691, leading to the generation and extracellular release of beta-cleaved soluble APP, and a corresponding cell-associated C-terminal fragment which is later released by gamma-secretase. It has also been shown that it can cleave APP between residues 671 and 672. Involved in the proteolytic shedding of PMEL at early stages of melanosome biogenesis. Cleaves PMEL within the M-beta fragment to release the amyloidogenic PMEL luminal fragment containing M-alpha and a small portion of M-beta N-terminus. This is a prerequisite step for subsequent processing and assembly of PMEL fibrils into amyloid sheets. Responsible also for the proteolytic processing of CLTRN in pancreatic beta cells. This Mus musculus (Mouse) protein is Beta-secretase 2 (Bace2).